We begin with the raw amino-acid sequence, 126 residues long: Small ribosomal subunit protein uS13 (126 aa).

Residues 92–126 (HRMGLPVRGQRTRTNARTRRGRRQTVAGKKKAPGK) are disordered. The span at 101–126 (QRTRTNARTRRGRRQTVAGKKKAPGK) shows a compositional bias: basic residues.

The protein belongs to the universal ribosomal protein uS13 family. In terms of assembly, part of the 30S ribosomal subunit. Forms a loose heterodimer with protein S19. Forms two bridges to the 50S subunit in the 70S ribosome.

Functionally, located at the top of the head of the 30S subunit, it contacts several helices of the 16S rRNA. In the 70S ribosome it contacts the 23S rRNA (bridge B1a) and protein L5 of the 50S subunit (bridge B1b), connecting the 2 subunits; these bridges are implicated in subunit movement. Contacts the tRNAs in the A and P-sites. The protein is Small ribosomal subunit protein uS13 of Nostoc sp. (strain PCC 7120 / SAG 25.82 / UTEX 2576).